Reading from the N-terminus, the 342-residue chain is Holliday junction branch migration complex subunit RuvB (342 aa).

Positions 1–184 are large ATPase domain (RuvB-L); sequence MEENFDIREQ…FGINLHLEYY (184 aa). ATP contacts are provided by residues Leu-23, Arg-24, Gly-65, Lys-68, Thr-69, Thr-70, 131–133, Arg-174, Tyr-184, and Arg-221; that span reads EDY. Thr-69 contacts Mg(2+). The interval 185 to 255 is small ATPAse domain (RuvB-S); it reads DDDVLTSIIR…IARFALEALN (71 aa). Positions 258–342 are head domain (RuvB-H); that stretch reads RYGLDEIDNK…YNSQKTLFDD (85 aa). DNA is bound by residues Arg-313 and Arg-318.

The protein belongs to the RuvB family. Homohexamer. Forms an RuvA(8)-RuvB(12)-Holliday junction (HJ) complex. HJ DNA is sandwiched between 2 RuvA tetramers; dsDNA enters through RuvA and exits via RuvB. An RuvB hexamer assembles on each DNA strand where it exits the tetramer. Each RuvB hexamer is contacted by two RuvA subunits (via domain III) on 2 adjacent RuvB subunits; this complex drives branch migration. In the full resolvosome a probable DNA-RuvA(4)-RuvB(12)-RuvC(2) complex forms which resolves the HJ.

It localises to the cytoplasm. It catalyses the reaction ATP + H2O = ADP + phosphate + H(+). In terms of biological role, the RuvA-RuvB-RuvC complex processes Holliday junction (HJ) DNA during genetic recombination and DNA repair, while the RuvA-RuvB complex plays an important role in the rescue of blocked DNA replication forks via replication fork reversal (RFR). RuvA specifically binds to HJ cruciform DNA, conferring on it an open structure. The RuvB hexamer acts as an ATP-dependent pump, pulling dsDNA into and through the RuvAB complex. RuvB forms 2 homohexamers on either side of HJ DNA bound by 1 or 2 RuvA tetramers; 4 subunits per hexamer contact DNA at a time. Coordinated motions by a converter formed by DNA-disengaged RuvB subunits stimulates ATP hydrolysis and nucleotide exchange. Immobilization of the converter enables RuvB to convert the ATP-contained energy into a lever motion, pulling 2 nucleotides of DNA out of the RuvA tetramer per ATP hydrolyzed, thus driving DNA branch migration. The RuvB motors rotate together with the DNA substrate, which together with the progressing nucleotide cycle form the mechanistic basis for DNA recombination by continuous HJ branch migration. Branch migration allows RuvC to scan DNA until it finds its consensus sequence, where it cleaves and resolves cruciform DNA. The protein is Holliday junction branch migration complex subunit RuvB of Phocaeicola vulgatus (strain ATCC 8482 / DSM 1447 / JCM 5826 / CCUG 4940 / NBRC 14291 / NCTC 11154) (Bacteroides vulgatus).